Here is a 219-residue protein sequence, read N- to C-terminus: 2-hydroxy-3-keto-5-methylthiopentenyl-1-phosphate phosphatase (219 aa).

The protein belongs to the HAD-like hydrolase superfamily. MtnX family.

The enzyme catalyses 2-hydroxy-5-methylsulfanyl-3-oxopent-1-enyl phosphate + H2O = 1,2-dihydroxy-5-(methylsulfanyl)pent-1-en-3-one + phosphate. The protein operates within amino-acid biosynthesis; L-methionine biosynthesis via salvage pathway; L-methionine from S-methyl-5-thio-alpha-D-ribose 1-phosphate: step 4/6. Dephosphorylates 2-hydroxy-3-keto-5-methylthiopentenyl-1-phosphate (HK-MTPenyl-1-P) yielding 1,2-dihydroxy-3-keto-5-methylthiopentene (DHK-MTPene). This chain is 2-hydroxy-3-keto-5-methylthiopentenyl-1-phosphate phosphatase, found in Bacillus anthracis (strain A0248).